Consider the following 464-residue polypeptide: D-inositol 3-phosphate glycosyltransferase (464 aa).

A compositionally biased stretch (basic and acidic residues) spans 1–20 (MEGAPRRPDRHARSEEERHV). The interval 1 to 44 (MEGAPRRPDRHARSEEERHVSQYASRLGRRSPAAPTRRRMLRKP) is disordered. His-53 is a binding site for 1D-myo-inositol 3-phosphate. UDP-N-acetyl-alpha-D-glucosamine contacts are provided by residues 59–60 (QP) and Gly-67. 1D-myo-inositol 3-phosphate-binding positions include 64 to 69 (DAGGMN), Lys-122, Tyr-155, Thr-179, and Arg-199. Positions 274, 279, and 340 each coordinate UDP-N-acetyl-alpha-D-glucosamine. Residues Phe-349, Arg-350, and Ala-352 each coordinate Mg(2+). 2 residues coordinate UDP-N-acetyl-alpha-D-glucosamine: Glu-362 and Glu-370. Thr-376 lines the Mg(2+) pocket.

This sequence belongs to the glycosyltransferase group 1 family. MshA subfamily. As to quaternary structure, homodimer.

It carries out the reaction 1D-myo-inositol 3-phosphate + UDP-N-acetyl-alpha-D-glucosamine = 1D-myo-inositol 2-acetamido-2-deoxy-alpha-D-glucopyranoside 3-phosphate + UDP + H(+). In terms of biological role, catalyzes the transfer of a N-acetyl-glucosamine moiety to 1D-myo-inositol 3-phosphate to produce 1D-myo-inositol 2-acetamido-2-deoxy-glucopyranoside 3-phosphate in the mycothiol biosynthesis pathway. In Streptomyces avermitilis (strain ATCC 31267 / DSM 46492 / JCM 5070 / NBRC 14893 / NCIMB 12804 / NRRL 8165 / MA-4680), this protein is D-inositol 3-phosphate glycosyltransferase.